The sequence spans 243 residues: Carboxy-S-adenosyl-L-methionine synthase (243 aa).

Residues Y40, 65–67, 90–91, 118–119, N133, and R200 each bind S-adenosyl-L-methionine; these read GCS, DN, and DI.

This sequence belongs to the class I-like SAM-binding methyltransferase superfamily. Cx-SAM synthase family. In terms of assembly, homodimer.

The enzyme catalyses prephenate + S-adenosyl-L-methionine = carboxy-S-adenosyl-L-methionine + 3-phenylpyruvate + H2O. Its function is as follows. Catalyzes the conversion of S-adenosyl-L-methionine (SAM) to carboxy-S-adenosyl-L-methionine (Cx-SAM). The protein is Carboxy-S-adenosyl-L-methionine synthase of Shewanella sp. (strain MR-7).